A 384-amino-acid chain; its full sequence is Secreted LysM effector Blys7 (384 aa).

Positions 1-18 (MQRHLLLGLAGLPALLSA) are cleaved as a signal peptide. Residues 27–71 (FATVAANGETCDSMAATWGLDTATFQSLNPKAKCPEVIGGEQYCV) enclose the LysM 1 domain. The span at 81 to 106 (EPTTAPATTSTQTTTTTTTEVTSTTV) shows a compositional bias: low complexity. The segment at 81-112 (EPTTAPATTSTQTTTTTTTEVTSTTVPGNGIT) is disordered. Residues 127 to 173 (KFYFVNKGDNCADITARYNLDLSDFLEWNPKAGNSCSGLWANAYACV) form the LysM 2 domain. The tract at residues 183–206 (KPKPTSTSTKPPTATGNGIPTPLP) is disordered. The segment covering 186 to 195 (PTSTSTKPPT) has biased composition (low complexity). Residues 217-263 (KFYLVKPGETCADIASRNGVSLSDFLQWNPHAGNACSGLWANAYACL) form the LysM 3 domain.

Belongs to the secreted LysM effector family.

Its function is as follows. Might have a role in sequestration of chitin oligosaccharides (breakdown products of fungal cell walls that are released during invasion and act as triggers of host immunity) to dampen host defense. This Beauveria bassiana (strain ARSEF 2860) (White muscardine disease fungus) protein is Secreted LysM effector Blys7.